The following is a 349-amino-acid chain: AA9 family lytic polysaccharide monooxygenase A (349 aa).

The signal sequence occupies residues 1 to 19 (MKSTFGLLALAAAAKLVSA). Cu(2+)-binding residues include His-20 and His-102. A disulfide bond links Cys-62 and Cys-183. His-169 serves as a coordination point for O2. A Cu(2+)-binding site is contributed by Tyr-180. The tract at residues 233 to 304 (DGSSSGSSGS…SGSNSGSDSC (72 aa)) is disordered. 2 stretches are compositionally biased toward low complexity: residues 234-262 (GSSS…AVPT) and 269-304 (TSAT…SDSC). Positions 311-347 (GSVKIYGQCGGQNYSGPTSCEAGLICKEWNPYYHQCV) constitute a CBM1 domain. An N-linked (GlcNAc...) asparagine glycan is attached at Asn-323.

This sequence belongs to the polysaccharide monooxygenase AA9 family. It depends on Cu(2+) as a cofactor.

The protein resides in the secreted. The enzyme catalyses [(1-&gt;4)-beta-D-glucosyl]n+m + reduced acceptor + O2 = 4-dehydro-beta-D-glucosyl-[(1-&gt;4)-beta-D-glucosyl]n-1 + [(1-&gt;4)-beta-D-glucosyl]m + acceptor + H2O.. In terms of biological role, lytic polysaccharide monooxygenase (LPMO) that depolymerizes crystalline and amorphous polysaccharides via the oxidation of scissile alpha- or beta-(1-4)-glycosidic bonds, yielding C4 oxidation products. Catalysis by LPMOs requires the reduction of the active-site copper from Cu(II) to Cu(I) by a reducing agent and H(2)O(2) or O(2) as a cosubstrate. The sequence is that of AA9 family lytic polysaccharide monooxygenase A (eglD) from Aspergillus fumigatus (strain CBS 144.89 / FGSC A1163 / CEA10) (Neosartorya fumigata).